Reading from the N-terminus, the 339-residue chain is MRVYYDCDVNVNLIKEKKVAIVGYGAQGHAHALNLKDSGVQNVRIALHSGSMTTKKAEADGFEVMSVAEAVQWADFIMIATPDELQADIYKEHIHDHLRDGAAISFAHGLSIHFGLIKVKKTVDVVMIAPKGAGRAVRSEYQHGRGIPCLIAVEQDVSGNAHDLALSYACGIGGGRSGIMKTTFREECETDLFGEQAVLCGGLVELIRAGFETLTEAGYAPEMAYFECLHEIKIIADLIYECGIANMNYSISNTAEWGEYVSGPRVITHETKAEMKRILKDIQTGKFTSEWIQEYRAGAARFKDMRRLNSNHLIEQTGDKIRSMMALTKSSAPVDKKHS.

The 182-residue stretch at 1-182 (MRVYYDCDVN…GGGRSGIMKT (182 aa)) folds into the KARI N-terminal Rossmann domain. NADP(+) is bound by residues 24–27 (YGAQ), serine 51, threonine 53, and 83–86 (DELQ). Histidine 108 is an active-site residue. Glycine 134 serves as a coordination point for NADP(+). In terms of domain architecture, KARI C-terminal knotted spans 183–328 (TFREECETDL…DKIRSMMALT (146 aa)). The Mg(2+) site is built by aspartate 191, glutamate 195, glutamate 227, and glutamate 231. Serine 252 contacts substrate.

This sequence belongs to the ketol-acid reductoisomerase family. It depends on Mg(2+) as a cofactor.

It catalyses the reaction (2R)-2,3-dihydroxy-3-methylbutanoate + NADP(+) = (2S)-2-acetolactate + NADPH + H(+). The enzyme catalyses (2R,3R)-2,3-dihydroxy-3-methylpentanoate + NADP(+) = (S)-2-ethyl-2-hydroxy-3-oxobutanoate + NADPH + H(+). It functions in the pathway amino-acid biosynthesis; L-isoleucine biosynthesis; L-isoleucine from 2-oxobutanoate: step 2/4. It participates in amino-acid biosynthesis; L-valine biosynthesis; L-valine from pyruvate: step 2/4. In terms of biological role, involved in the biosynthesis of branched-chain amino acids (BCAA). Catalyzes an alkyl-migration followed by a ketol-acid reduction of (S)-2-acetolactate (S2AL) to yield (R)-2,3-dihydroxy-isovalerate. In the isomerase reaction, S2AL is rearranged via a Mg-dependent methyl migration to produce 3-hydroxy-3-methyl-2-ketobutyrate (HMKB). In the reductase reaction, this 2-ketoacid undergoes a metal-dependent reduction by NADPH to yield (R)-2,3-dihydroxy-isovalerate. This is Ketol-acid reductoisomerase (NADP(+)) from Bartonella bacilliformis (strain ATCC 35685 / KC583 / Herrer 020/F12,63).